Here is a 187-residue protein sequence, read N- to C-terminus: Ion-translocating oxidoreductase complex subunit B (187 aa).

Residues 1–23 (MIAAAASMSALGLGLGYLLGAAA) form a hydrophobic region. The 60-residue stretch at 29–88 (ETPPIVEEIAKILPGTNCGACGFPGCNGLAEAMAEGNAPVTACTPGGRDVALALAEIVTV) folds into the 4Fe-4S domain. Residues C46, C49, C54, C71, C112, C115, C118, C122, C142, C145, C148, and C152 each contribute to the [4Fe-4S] cluster site. 2 consecutive 4Fe-4S ferredoxin-type domains span residues 103–132 (MVAF…GGAK) and 133–162 (QIHT…SRVK).

This sequence belongs to the 4Fe4S bacterial-type ferredoxin family. RnfB subfamily. In terms of assembly, the complex is composed of six subunits: RnfA, RnfB, RnfC, RnfD, RnfE and RnfG. [4Fe-4S] cluster is required as a cofactor.

Its subcellular location is the cellular chromatophore membrane. In terms of biological role, part of a membrane-bound complex that couples electron transfer with translocation of ions across the membrane. Required for nitrogen fixation. Involved in electron transfer to nitrogenase. The polypeptide is Ion-translocating oxidoreductase complex subunit B (Rhodobacter capsulatus (Rhodopseudomonas capsulata)).